The sequence spans 91 residues: Small ribosomal subunit protein uS19 (91 aa).

It belongs to the universal ribosomal protein uS19 family.

Functionally, protein S19 forms a complex with S13 that binds strongly to the 16S ribosomal RNA. The sequence is that of Small ribosomal subunit protein uS19 from Bordetella avium (strain 197N).